A 168-amino-acid polypeptide reads, in one-letter code: Crossover junction endodeoxyribonuclease RuvC (168 aa).

Active-site residues include Asp-8, Glu-68, and Asp-140. Asp-8, Glu-68, and Asp-140 together coordinate Mg(2+).

The protein belongs to the RuvC family. In terms of assembly, homodimer which binds Holliday junction (HJ) DNA. The HJ becomes 2-fold symmetrical on binding to RuvC with unstacked arms; it has a different conformation from HJ DNA in complex with RuvA. In the full resolvosome a probable DNA-RuvA(4)-RuvB(12)-RuvC(2) complex forms which resolves the HJ. Mg(2+) serves as cofactor.

The protein resides in the cytoplasm. The enzyme catalyses Endonucleolytic cleavage at a junction such as a reciprocal single-stranded crossover between two homologous DNA duplexes (Holliday junction).. In terms of biological role, the RuvA-RuvB-RuvC complex processes Holliday junction (HJ) DNA during genetic recombination and DNA repair. Endonuclease that resolves HJ intermediates. Cleaves cruciform DNA by making single-stranded nicks across the HJ at symmetrical positions within the homologous arms, yielding a 5'-phosphate and a 3'-hydroxyl group; requires a central core of homology in the junction. The consensus cleavage sequence is 5'-(A/T)TT(C/G)-3'. Cleavage occurs on the 3'-side of the TT dinucleotide at the point of strand exchange. HJ branch migration catalyzed by RuvA-RuvB allows RuvC to scan DNA until it finds its consensus sequence, where it cleaves and resolves the cruciform DNA. The chain is Crossover junction endodeoxyribonuclease RuvC from Gluconacetobacter diazotrophicus (strain ATCC 49037 / DSM 5601 / CCUG 37298 / CIP 103539 / LMG 7603 / PAl5).